The primary structure comprises 541 residues: L-ornithine N(5)-monooxygenase (541 aa).

FAD-binding positions include 50–58 (EKQPEFQWH) and Q69. K74 contributes to the substrate binding site. 223 to 226 (SGQS) contributes to the NADP(+) binding site. Substrate-binding positions include 269–272 (NEIF) and N300. 300–302 (NYS) is an NADP(+) binding site. The disordered stretch occupies residues 430-474 (TEIPKGPDGSLFDASEEEATWRPASPITPASPSPPSTPTSSALSQ). An FAD-binding site is contributed by 520 to 522 (SLL). Residue S523 participates in substrate binding.

The protein belongs to the lysine N(6)-hydroxylase/L-ornithine N(5)-oxygenase family. In terms of assembly, homotetramer. Requires FAD as cofactor.

The enzyme catalyses L-ornithine + NADPH + O2 = N(5)-hydroxy-L-ornithine + NADP(+) + H2O. It catalyses the reaction L-ornithine + NADH + O2 = N(5)-hydroxy-L-ornithine + NAD(+) + H2O. The protein operates within siderophore biosynthesis. L-ornithine N(5)-monooxygenase; part of the siderophore basidioferrin biosynthetic pathway. The biosynthesis of basidioferrin depends on the hydroxylation of ornithine to N(5)-hydroxyornithine, catalyzed by the monooxygenase SMO1. The second step, the acylation of N(5)-hydroxy-L-ornithine is catalyzed by a not yet identified N-acyltransferase. Finally, assembly of basidioferrin is catalyzed by the nonribosomal peptide synthase (NRPS) NPS2 via amide bond formation between three L-AHO molecules to release the linear L-AHO trimer. This Ceriporiopsis subvermispora (strain B) (White-rot fungus) protein is L-ornithine N(5)-monooxygenase (SMO1).